Consider the following 377-residue polypeptide: NADH dehydrogenase [ubiquinone] 1 alpha subcomplex subunit 9, mitochondrial (377 aa).

The transit peptide at 1–35 directs the protein to the mitochondrion; sequence MAAAAQSRVVRVLSMSRSAITAIATSVCHGPPRRQ. Residue Lys175 is modified to N6-succinyllysine. Lys189 and Lys370 each carry N6-acetyllysine.

This sequence belongs to the complex I NDUFA9 subunit family. As to quaternary structure, complex I is composed of 45 different subunits. This a component of the hydrophobic protein fraction. Interacts with BLOC1S1. Interacts with SLC2A4. Interacts with CLOCK. Interacts with RAB5IF. Requires FAD as cofactor. Post-translationally, acetylated on lysine residues. BLOC1S1 is required for acetylation. Acetylated by CLOCK in a circadian manner.

The protein localises to the mitochondrion matrix. Functionally, accessory subunit of the mitochondrial membrane respiratory chain NADH dehydrogenase (Complex I), that is believed not to be involved in catalysis. Complex I functions in the transfer of electrons from NADH to the respiratory chain. The immediate electron acceptor for the enzyme is believed to be ubiquinone. This chain is NADH dehydrogenase [ubiquinone] 1 alpha subcomplex subunit 9, mitochondrial (NDUFA9), found in Pongo abelii (Sumatran orangutan).